We begin with the raw amino-acid sequence, 104 residues long: Ig lambda-1 chain C region (104 aa).

In terms of domain architecture, Ig-like spans 6-99 (PSVTLFPPSS…EENTVEKSLS (94 aa)). Cys-27 and Cys-85 are oxidised to a cystine.

The chain is Ig lambda-1 chain C region from Rattus norvegicus (Rat).